Consider the following 335-residue polypeptide: Probable cytosolic iron-sulfur protein assembly protein Ciao1 (335 aa).

WD repeat units lie at residues 12–51, 57–96, 101–140, 146–185, 192–231, 250–289, and 301–335; these read GHKG…WTTK, GHKR…FECN, GHEN…EFEC, PHTQ…SDWD, SHTS…NDAG, QHSR…KRDE, and AHDQ…KMTE.

This sequence belongs to the WD repeat CIA1 family.

In terms of biological role, essential component of the cytosolic iron-sulfur (Fe/S) protein assembly machinery. Required for the maturation of extramitochondrial Fe/S proteins. The chain is Probable cytosolic iron-sulfur protein assembly protein Ciao1 from Drosophila ananassae (Fruit fly).